We begin with the raw amino-acid sequence, 452 residues long: MKEADAIKLFIGQIPRNLEEKDLKPIFEQFGKIYELTVIKDKYTGMHKGCAFLTYCARESALKAQNALHEQKTLPGMNRPIQVKPADSEGRGDRKLFVGMLGKQLSDADVRKMFEPFGSIEECTVLRGPDGASKGCAFVKYQSNAEAQAAISALHGSRTLPGASSSLVVKFADTEKERGIRRMQQVASQLGVISPMSLHLGAYNAYTQALVQQQALVAQSAYLSPVATVAAVQMQQLAALNPSSIIATPIASITPSSGTSTPPTIAATPVPALPPPIAVNSYPPVPAAPNGQSASEALYTNGVHPYQAQSPALDPLQQAYTGMQHYTATYPAAYGLVGQPFPHQPTLVAQQPQQPQQLQQREGPEGCNIFIYHLPQEFTDSEMLQMFLPFGNVISAKVFVDRATNQSKCFGFVSFDNPASAQAAIQAMNGFQIGMKRLKVQLKRPKDANRPY.

3 consecutive RRM domains span residues isoleucine 7–serine 88, arginine 94–threonine 174, and cysteine 367–proline 445.

This sequence belongs to the CELF/BRUNOL family.

Its subcellular location is the nucleus. The protein resides in the cytoplasm. In terms of biological role, RNA-binding protein that may be involved in the regulation of pre-mRNA alternative splicing. This Danio rerio (Zebrafish) protein is CUGBP Elav-like family member 3 (celf3).